The primary structure comprises 224 residues: PKHD-type hydroxylase Tgr7_2199 (224 aa).

The Fe2OG dioxygenase domain maps to 78–176 (KLSGAFFARY…RLVAVAWAES (99 aa)). The Fe cation site is built by His-96, Asp-98, and His-157. Arg-167 contacts 2-oxoglutarate.

The cofactor is Fe(2+). Requires L-ascorbate as cofactor.

The chain is PKHD-type hydroxylase Tgr7_2199 from Thioalkalivibrio sulfidiphilus (strain HL-EbGR7).